A 552-amino-acid chain; its full sequence is Dihydroxy-acid dehydratase (552 aa).

Asp78 contacts Mg(2+). Cys119 is a binding site for [2Fe-2S] cluster. 2 residues coordinate Mg(2+): Asp120 and Lys121. Lys121 carries the N6-carboxylysine modification. Position 190 (Cys190) interacts with [2Fe-2S] cluster. Residue Glu441 participates in Mg(2+) binding. Ser467 functions as the Proton acceptor in the catalytic mechanism.

The protein belongs to the IlvD/Edd family. As to quaternary structure, homodimer. [2Fe-2S] cluster is required as a cofactor. Mg(2+) serves as cofactor.

It catalyses the reaction (2R)-2,3-dihydroxy-3-methylbutanoate = 3-methyl-2-oxobutanoate + H2O. It carries out the reaction (2R,3R)-2,3-dihydroxy-3-methylpentanoate = (S)-3-methyl-2-oxopentanoate + H2O. It participates in amino-acid biosynthesis; L-isoleucine biosynthesis; L-isoleucine from 2-oxobutanoate: step 3/4. Its pathway is amino-acid biosynthesis; L-valine biosynthesis; L-valine from pyruvate: step 3/4. In terms of biological role, functions in the biosynthesis of branched-chain amino acids. Catalyzes the dehydration of (2R,3R)-2,3-dihydroxy-3-methylpentanoate (2,3-dihydroxy-3-methylvalerate) into 2-oxo-3-methylpentanoate (2-oxo-3-methylvalerate) and of (2R)-2,3-dihydroxy-3-methylbutanoate (2,3-dihydroxyisovalerate) into 2-oxo-3-methylbutanoate (2-oxoisovalerate), the penultimate precursor to L-isoleucine and L-valine, respectively. In Ignicoccus hospitalis (strain KIN4/I / DSM 18386 / JCM 14125), this protein is Dihydroxy-acid dehydratase.